The following is a 120-amino-acid chain: Flagellar protein FliT (120 aa).

The segment at 1 to 50 (MENLSPLLIEYQGLLKLIRNIKAMALNGLWDDVVEQEIVYIQSIERISQI) is required for homodimerization. A fliD binding region spans residues 60 to 98 (VQLQFRQLLQDILDTESQVKELLQNRMQELAVLIQQSQN).

This sequence belongs to the FliT family. As to quaternary structure, homodimer. Interacts with FliD and FlhC.

Its subcellular location is the cytoplasm. The protein localises to the cytosol. Its function is as follows. Dual-function protein that regulates the transcription of class 2 flagellar operons and that also acts as an export chaperone for the filament-capping protein FliD. As a transcriptional regulator, acts as an anti-FlhDC factor; it directly binds FlhC, thus inhibiting the binding of the FlhC/FlhD complex to class 2 promoters, resulting in decreased expression of class 2 flagellar operons. As a chaperone, effects FliD transition to the membrane by preventing its premature polymerization, and by directing it to the export apparatus. The sequence is that of Flagellar protein FliT from Dickeya chrysanthemi (Pectobacterium chrysanthemi).